A 76-amino-acid chain; its full sequence is Precursor of CEP7 (76 aa).

A signal peptide spans 1-27 (MAKCTLTSLILLLIVLVLIQESHIVEG). Positions 28–61 (RPLKSSRISNVSKKFAAGNSNLSSKLTTEDHSLD) are excised as a propeptide. N-linked (GlcNAc...) asparagine glycans are attached at residues asparagine 37 and asparagine 48. Positions 49–76 (LSSKLTTEDHSLDAFRPTNPGNSPGIGH) are disordered. Hydroxyproline is present on residues proline 65, proline 68, and proline 72.

The protein belongs to the C-terminally encoded plant signaling peptide (CEP) family. Interacts with CEP receptors (e.g. CEPR1 and CEPR2). In terms of processing, the mature small signaling peptide is generated by proteolytic processing of the longer precursor.

The protein resides in the secreted. It is found in the extracellular space. It localises to the apoplast. In terms of biological role, extracellular signaling peptide that may regulate primary root growth rate and systemic nitrogen (N)-demand signaling. Mediates up-regulation of genes involved in N uptake and assimilation pathways. This Arabidopsis thaliana (Mouse-ear cress) protein is Precursor of CEP7.